The primary structure comprises 561 residues: Glutamine--tRNA ligase (561 aa).

Positions 34–44 match the 'HIGH' region motif; sequence PEPNGYLHIGH. ATP-binding positions include 35–37 and 41–47; these read EPN and HIGHAKS. L-glutamine-binding residues include Asp-67 and Tyr-212. ATP-binding positions include Thr-231, 261-262, and 269-271; these read RL and MSK. The short motif at 268 to 272 is the 'KMSKS' region element; that stretch reads VMSKR.

The protein belongs to the class-I aminoacyl-tRNA synthetase family. Monomer.

The protein resides in the cytoplasm. It catalyses the reaction tRNA(Gln) + L-glutamine + ATP = L-glutaminyl-tRNA(Gln) + AMP + diphosphate. The protein is Glutamine--tRNA ligase of Idiomarina loihiensis (strain ATCC BAA-735 / DSM 15497 / L2-TR).